The sequence spans 315 residues: Calcium homeostasis modulator protein 4 (315 aa).

Residues 1–14 (MSPDLNCISSSLLR) are Cytoplasmic-facing. A helical transmembrane segment spans residues 15-37 (SEPCINSLIAILTVCGQQLFSSY). Over 38-48 (TFSCPCQVGKN) the chain is Extracellular. Intrachain disulfides connect C41–C132 and C43–C163. A helical transmembrane segment spans residues 49-71 (FYYGSAFLVVPALILLIAGYALR). Residues 72-104 (GQMWTVASEYCCCSCTPPYRRSSPLERRLACLM) are Cytoplasmic-facing. Residues 105–130 (FFDITGRALVAPLTWLTVTLLTGTYY) form a helical membrane-spanning segment. Residues 131–184 (ECAASEFASVDQYPMFANVTPSKREEMLAGFPCYTSAPSDVIPIRDEVALLHRY) are Extracellular-facing. The chain crosses the membrane as a helical span at residues 185–208 (QSQMLGWILVVLATIALLLSKCLA). Topologically, residues 209–315 (RCCSPLTSLQ…DRQEGIEMKP (107 aa)) are cytoplasmic.

This sequence belongs to the CALHM family. In terms of assembly, oligomerizes to form decameric and undecameric channels. Two hemichannels can assemble in a tail-to-tail manner to form a gap junction.

The protein resides in the cell membrane. Functionally, may assemble to form gap junction channel-like structures involved in intercellular communication. Channel gating and ion conductance are likely regulated by membrane lipids rather than by membrane depolarization or extracellular calcium levels. This Mus musculus (Mouse) protein is Calcium homeostasis modulator protein 4.